A 263-amino-acid chain; its full sequence is Undecaprenyl-diphosphatase 3 (263 aa).

Helical transmembrane passes span 15–37 (GLTE…LIGF), 42–62 (AKVF…VIFW), 83–103 (LHII…HSAI), 106–126 (VLFG…LMIV), 142–162 (ITYK…WPGF), 183–203 (AEYT…LDLI), 216–236 (LFAT…VSFL), and 242–262 (VKLT…YFFI).

This sequence belongs to the UppP family.

The protein resides in the cell membrane. It carries out the reaction di-trans,octa-cis-undecaprenyl diphosphate + H2O = di-trans,octa-cis-undecaprenyl phosphate + phosphate + H(+). Functionally, catalyzes the dephosphorylation of undecaprenyl diphosphate (UPP). Confers resistance to bacitracin. In Bacillus thuringiensis subsp. konkukian (strain 97-27), this protein is Undecaprenyl-diphosphatase 3.